We begin with the raw amino-acid sequence, 481 residues long: ATP synthase subunit beta (481 aa).

160-167 (GGAGVGKT) is an ATP binding site.

Belongs to the ATPase alpha/beta chains family. As to quaternary structure, F-type ATPases have 2 components, CF(1) - the catalytic core - and CF(0) - the membrane proton channel. CF(1) has five subunits: alpha(3), beta(3), gamma(1), delta(1), epsilon(1). CF(0) has three main subunits: a(1), b(2) and c(9-12). The alpha and beta chains form an alternating ring which encloses part of the gamma chain. CF(1) is attached to CF(0) by a central stalk formed by the gamma and epsilon chains, while a peripheral stalk is formed by the delta and b chains.

It localises to the cell inner membrane. The catalysed reaction is ATP + H2O + 4 H(+)(in) = ADP + phosphate + 5 H(+)(out). Functionally, produces ATP from ADP in the presence of a proton gradient across the membrane. The catalytic sites are hosted primarily by the beta subunits. This is ATP synthase subunit beta from Anaeromyxobacter sp. (strain Fw109-5).